Here is a 259-residue protein sequence, read N- to C-terminus: Protein N-terminal and lysine N-methyltransferase efm7 (259 aa).

Residues tryptophan 53, 80–82 (GAA), aspartate 102, tryptophan 138, and alanine 164 each bind S-adenosyl-L-methionine.

The protein belongs to the class I-like SAM-binding methyltransferase superfamily. EFM7 family.

The protein resides in the cytoplasm. In terms of biological role, S-adenosyl-L-methionine-dependent protein methyltransferase that trimethylates the N-terminal glycine 'Gly-2' of elongation factor 1-alpha, before also catalyzing the mono- and dimethylation of 'Lys-3'. The chain is Protein N-terminal and lysine N-methyltransferase efm7 from Emericella nidulans (strain FGSC A4 / ATCC 38163 / CBS 112.46 / NRRL 194 / M139) (Aspergillus nidulans).